The following is a 303-amino-acid chain: UDP-N-acetylenolpyruvoylglucosamine reductase (303 aa).

One can recognise an FAD-binding PCMH-type domain in the interval 27–207 (KVGGISQVFY…TSISQKLQKI (181 aa)). R175 is an active-site residue. S224 serves as the catalytic Proton donor. E294 is an active-site residue.

It belongs to the MurB family. It depends on FAD as a cofactor.

It localises to the cytoplasm. The enzyme catalyses UDP-N-acetyl-alpha-D-muramate + NADP(+) = UDP-N-acetyl-3-O-(1-carboxyvinyl)-alpha-D-glucosamine + NADPH + H(+). Its pathway is cell wall biogenesis; peptidoglycan biosynthesis. Cell wall formation. This Orientia tsutsugamushi (strain Boryong) (Rickettsia tsutsugamushi) protein is UDP-N-acetylenolpyruvoylglucosamine reductase.